The following is a 517-amino-acid chain: Crotonobetaine/carnitine--CoA ligase (517 aa).

This sequence belongs to the ATP-dependent AMP-binding enzyme family.

The enzyme catalyses 4-(trimethylamino)butanoate + ATP + CoA = 4-(trimethylamino)butanoyl-CoA + AMP + diphosphate. It catalyses the reaction crotonobetaine + ATP + CoA = crotonobetainyl-CoA + AMP + diphosphate. It carries out the reaction (R)-carnitine + ATP + CoA = (R)-carnitinyl-CoA + AMP + diphosphate. The protein operates within amine and polyamine metabolism; carnitine metabolism. In terms of biological role, catalyzes the transfer of CoA to carnitine, generating the initial carnitinyl-CoA needed for the CaiB reaction cycle. Also has activity toward crotonobetaine and gamma-butyrobetaine. The protein is Crotonobetaine/carnitine--CoA ligase of Escherichia coli (strain K12 / MC4100 / BW2952).